The sequence spans 418 residues: UDP-N-acetylglucosamine 1-carboxyvinyltransferase (418 aa).

22–23 (KN) lines the phosphoenolpyruvate pocket. A UDP-N-acetyl-alpha-D-glucosamine-binding site is contributed by arginine 93. The active-site Proton donor is the cysteine 117. Cysteine 117 carries the post-translational modification 2-(S-cysteinyl)pyruvic acid O-phosphothioketal. Aspartate 306 and isoleucine 328 together coordinate UDP-N-acetyl-alpha-D-glucosamine.

Belongs to the EPSP synthase family. MurA subfamily.

It is found in the cytoplasm. It catalyses the reaction phosphoenolpyruvate + UDP-N-acetyl-alpha-D-glucosamine = UDP-N-acetyl-3-O-(1-carboxyvinyl)-alpha-D-glucosamine + phosphate. It functions in the pathway cell wall biogenesis; peptidoglycan biosynthesis. In terms of biological role, cell wall formation. Adds enolpyruvyl to UDP-N-acetylglucosamine. This Hydrogenovibrio crunogenus (strain DSM 25203 / XCL-2) (Thiomicrospira crunogena) protein is UDP-N-acetylglucosamine 1-carboxyvinyltransferase.